The following is a 212-amino-acid chain: uncharacterized protein (212 aa).

The NERD domain occupies 29 to 146 (KGKAGEKLVK…AAFHPKCSLK (118 aa)).

This is an uncharacterized protein from Bacillus anthracis.